We begin with the raw amino-acid sequence, 33 residues long: Photosystem II reaction center protein Psb30 (33 aa).

A helical transmembrane segment spans residues 5 to 25; sequence VIAQLASLALIIVLGPLVIGL.

It belongs to the Psb30/Ycf12 family. PSII is composed of 1 copy each of membrane proteins PsbA, PsbB, PsbC, PsbD, PsbE, PsbF, PsbH, PsbI, PsbJ, PsbK, PsbL, PsbM, PsbT, PsbX, PsbY, PsbZ, Psb30/Ycf12, peripheral proteins of the oxygen-evolving complex and a large number of cofactors. It forms dimeric complexes.

The protein localises to the plastid. The protein resides in the chloroplast thylakoid membrane. In terms of biological role, a core subunit of photosystem II (PSII), probably helps stabilize the reaction center. The chain is Photosystem II reaction center protein Psb30 from Chara vulgaris (Common stonewort).